A 341-amino-acid chain; its full sequence is tRNA N6-adenosine threonylcarbamoyltransferase (341 aa).

Residues His111 and His115 each coordinate Fe cation. Substrate is bound by residues Leu134–Gly138, Asp167, Gly180, and Asn276. Asp304 lines the Fe cation pocket.

Belongs to the KAE1 / TsaD family. It depends on Fe(2+) as a cofactor.

Its subcellular location is the cytoplasm. The catalysed reaction is L-threonylcarbamoyladenylate + adenosine(37) in tRNA = N(6)-L-threonylcarbamoyladenosine(37) in tRNA + AMP + H(+). In terms of biological role, required for the formation of a threonylcarbamoyl group on adenosine at position 37 (t(6)A37) in tRNAs that read codons beginning with adenine. Is involved in the transfer of the threonylcarbamoyl moiety of threonylcarbamoyl-AMP (TC-AMP) to the N6 group of A37, together with TsaE and TsaB. TsaD likely plays a direct catalytic role in this reaction. This Pseudomonas putida (strain ATCC 47054 / DSM 6125 / CFBP 8728 / NCIMB 11950 / KT2440) protein is tRNA N6-adenosine threonylcarbamoyltransferase.